The primary structure comprises 1273 residues: Kinesin-like protein KIN-14A (1273 aa).

A disordered region spans residues 1-52; that stretch reads MADQRSKTNRWNWEVSGFEPRKSSSNASFAESTGHRTTGPLLRRNSISTPSL. Positions 59–89 form a coiled coil; it reads ASKVNGLKEKVKLAKEDYLELRQEATDLQEY. Positions 142-456 constitute a Kinesin motor domain; the sequence is NIKVFCRARP…LNYAARARNT (315 aa). 223 to 230 is an ATP binding site; the sequence is GQTNAGKT. Coiled coils occupy residues 466–511, 559–595, and 627–657; these read IKKW…CVLL, QLDQ…AVRS, and TKKL…RLTE. Disordered stretches follow at residues 827-847 and 1136-1157; these read KPNT…RSPV and QEDT…SISS. Positions 830–846 are enriched in low complexity; that stretch reads TGRSKSTSRGSSPGRSP.

This sequence belongs to the TRAFAC class myosin-kinesin ATPase superfamily. Kinesin family. KIN-14 subfamily. In terms of assembly, homodimer and heterodimer with KCA2. Interacts with CDKA-1. Interacts with AL1, a geminivirus (TGMV) protein essential for viral replication. Interacts with LUE1/KSS. Part of the phosphorylation is not CDK-dependent. Widely expressed.

The protein resides in the nucleus. The protein localises to the cytoplasm. Its subcellular location is the cytoskeleton. It is found in the spindle. It localises to the chromosome. The protein resides in the cell membrane. The protein localises to the phragmoplast. Kinesin-like protein required for chloroplast movements and anchor to the plasma membrane. Mediates chloroplast movement via chloroplast actin (cp-actin) filaments. Required for the chloroplast avoidance response under high intensity blue light. Mediates redundantly with CHUP1 the nuclear avoidance response under high intensity blue light. May act as a mitotic kinesin. Probably involved in division plane determination. In Arabidopsis thaliana (Mouse-ear cress), this protein is Kinesin-like protein KIN-14A.